Consider the following 104-residue polypeptide: L-rhamnose mutarotase (104 aa).

Tyr-18 serves as a coordination point for substrate. His-22 acts as the Proton donor in catalysis. Substrate is bound by residues Tyr-41 and 76–77 (WW).

Belongs to the rhamnose mutarotase family. As to quaternary structure, homodimer.

The protein resides in the cytoplasm. The enzyme catalyses alpha-L-rhamnose = beta-L-rhamnose. Its pathway is carbohydrate metabolism; L-rhamnose metabolism. In terms of biological role, involved in the anomeric conversion of L-rhamnose. In Bacteroides thetaiotaomicron (strain ATCC 29148 / DSM 2079 / JCM 5827 / CCUG 10774 / NCTC 10582 / VPI-5482 / E50), this protein is L-rhamnose mutarotase.